The following is a 188-amino-acid chain: Photosystem I assembly protein Ycf4 (188 aa).

2 consecutive transmembrane segments (helical) span residues 26–46 and 70–90; these read YFWA…GLSS and LLFY…SLLW.

Belongs to the Ycf4 family.

It is found in the cellular thylakoid membrane. Functionally, seems to be required for the assembly of the photosystem I complex. The polypeptide is Photosystem I assembly protein Ycf4 (Microcystis aeruginosa (strain NIES-843 / IAM M-2473)).